Here is a 60-residue protein sequence, read N- to C-terminus: uncharacterized protein (60 aa).

It localises to the host cytoplasm. This is an uncharacterized protein from Escherichia phage Mu (Bacteriophage Mu).